The chain runs to 350 residues: Dauer larva development regulatory growth factor daf-7 (350 aa).

An N-terminal signal peptide occupies residues 1 to 21 (MFMASSLPVFIFLLSLPHGLT). Positions 22–234 (FNCTNSGVCI…TRPKGSRKRR (213 aa)) are excised as a propeptide. N-linked (GlcNAc...) asparagine glycosylation occurs at asparagine 23. Intrachain disulfides connect cysteine 241–cysteine 251, cysteine 250–cysteine 315, cysteine 278–cysteine 347, and cysteine 282–cysteine 349.

The protein belongs to the TGF-beta family. As to expression, expressed in the chemosensory neurons, including in the ASJ neurons in males. Expressed in the ASI neurons.

It localises to the secreted. Under harsh environmental conditions, larvae enter a developmentally arrested state known as dauer; TGF-beta-like daf-7 acts to inhibit dauer larva formation and promote growth. May be a ligand to cell surface receptor daf-4. May act as a negative regulator of dauer larva development by transducing chemosensory information from ASI neurons. Involved in sensitivity to CO2 levels. Involved in mate searching behavior of males, acting in concert with the neuropeptide pdf-1. In AWC neurons, acts to promote expression of srsx-3, a member of the GPCR family. In Caenorhabditis elegans, this protein is Dauer larva development regulatory growth factor daf-7.